The primary structure comprises 671 residues: Major S-layer protein (671 aa).

The N-terminal stretch at 1 to 24 (MKRFAALSLAALMLLTVFASAASA) is a signal peptide. Residues Asn36, Asn70, Asn116, and Asn350 are each glycosylated (N-linked (GlcNAc...) asparagine). A disordered region spans residues 594-650 (GEEVSGEEETPEETPTGEVTETEGEEETPTEVTETPTEGEPAPEETETTESEGTTPG). Over residues 613–622 (TETEGEEETP) the composition is skewed to acidic residues. A compositionally biased stretch (low complexity) spans 623-633 (TEVTETPTEGE). The span at 634–643 (PAPEETETTE) shows a compositional bias: acidic residues. The helical transmembrane segment at 647–667 (TTPGFGFMFGLVGLLAVVYLV) threads the bilayer.

This sequence belongs to the Methanosarcinales S-layer protein family. Post-translationally, glycosylated.

It localises to the secreted. The protein resides in the cell wall. It is found in the S-layer. Its subcellular location is the cell membrane. Its function is as follows. S-layer protein. The S-layer is a paracrystalline mono-layered assembly of proteins which coat the surface of the cell. This chain is Major S-layer protein, found in Methanosarcina acetivorans (strain ATCC 35395 / DSM 2834 / JCM 12185 / C2A).